The sequence spans 178 residues: Translation initiation factor IF-3 (178 aa).

Belongs to the IF-3 family. Monomer.

The protein resides in the cytoplasm. Its function is as follows. IF-3 binds to the 30S ribosomal subunit and shifts the equilibrium between 70S ribosomes and their 50S and 30S subunits in favor of the free subunits, thus enhancing the availability of 30S subunits on which protein synthesis initiation begins. In Nautilia profundicola (strain ATCC BAA-1463 / DSM 18972 / AmH), this protein is Translation initiation factor IF-3.